A 105-amino-acid chain; its full sequence is MDMYKKIGVVGDKDSVLAFKALGIDVFPVVEDEEARKTIDKLAMTGYAVIFVTEHVAKNIEETIERYTRQVLPAVILIPSNQGTLNIGKQRISDNVEKAVGVNIL.

The protein belongs to the V-ATPase F subunit family.

In terms of biological role, produces ATP from ADP in the presence of a proton gradient across the membrane. The polypeptide is V-type ATP synthase subunit F (Clostridium perfringens (strain 13 / Type A)).